A 508-amino-acid chain; its full sequence is Cobyric acid synthase (508 aa).

Residues 255 to 454 (ELNIAVLKLP…LHGVFESGPW (200 aa)) enclose the GATase cobBQ-type domain. Catalysis depends on cysteine 336, which acts as the Nucleophile. The active site involves histidine 446.

This sequence belongs to the CobB/CobQ family. CobQ subfamily.

It participates in cofactor biosynthesis; adenosylcobalamin biosynthesis. Its function is as follows. Catalyzes amidations at positions B, D, E, and G on adenosylcobyrinic A,C-diamide. NH(2) groups are provided by glutamine, and one molecule of ATP is hydrogenolyzed for each amidation. This Synechococcus sp. (strain CC9311) protein is Cobyric acid synthase.